Reading from the N-terminus, the 171-residue chain is Putative RING finger protein 027R (171 aa).

The segment at 121 to 163 adopts an RING-type zinc-finger fold; that stretch reads CAVCMTNPVWVDFVWSCKHISTCIKCLKMLSRGSNGFKCPICR.

Belongs to the IIV-6 157L family.

This is Putative RING finger protein 027R from Aedes vexans (Inland floodwater mosquito).